The primary structure comprises 251 residues: Transcription factor bHLH144 (251 aa).

Disordered stretches follow at residues 1–20, 130–161, and 173–202; these read MQNNQFPHFSDEVGDRNMHN, YEENDDNEGEEDGGDSEEVSTARTSSRDYGNT, and NNNNNNNSRKQSLSGSASSSNNDGKGRKKM. The span at 9–18 shows a compositional bias: basic and acidic residues; that stretch reads FSDEVGDRNM. The span at 130-147 shows a compositional bias: acidic residues; the sequence is YEENDDNEGEEDGGDSEE. A compositionally biased stretch (polar residues) spans 148–161; sequence VSTARTSSRDYGNT. Positions 173 to 192 are enriched in low complexity; that stretch reads NNNNNNNSRKQSLSGSASSS. One can recognise a bHLH domain in the interval 186 to 235; it reads SGSASSSNNDGKGRKKMKKMMGVLRRIVPGGEQMNTACVLDEAVQYLKSL.

As to quaternary structure, homodimer. Interacts with LHW.

The protein localises to the nucleus. The protein is Transcription factor bHLH144 (BHLH144) of Arabidopsis thaliana (Mouse-ear cress).